A 168-amino-acid polypeptide reads, in one-letter code: Peptide deformylase 1 (168 aa).

Residues cysteine 91 and histidine 133 each contribute to the Fe cation site. Glutamate 134 is a catalytic residue. Histidine 137 is a Fe cation binding site.

It belongs to the polypeptide deformylase family. Fe(2+) is required as a cofactor.

It carries out the reaction N-terminal N-formyl-L-methionyl-[peptide] + H2O = N-terminal L-methionyl-[peptide] + formate. Its function is as follows. Removes the formyl group from the N-terminal Met of newly synthesized proteins. Requires at least a dipeptide for an efficient rate of reaction. N-terminal L-methionine is a prerequisite for activity but the enzyme has broad specificity at other positions. The protein is Peptide deformylase 1 of Vibrio vulnificus (strain YJ016).